The primary structure comprises 526 residues: 2-succinyl-5-enolpyruvyl-6-hydroxy-3-cyclohexene-1-carboxylate synthase (526 aa).

This sequence belongs to the TPP enzyme family. MenD subfamily. Homodimer. The cofactor is Mg(2+). Mn(2+) serves as cofactor. It depends on thiamine diphosphate as a cofactor.

It catalyses the reaction isochorismate + 2-oxoglutarate + H(+) = 5-enolpyruvoyl-6-hydroxy-2-succinyl-cyclohex-3-ene-1-carboxylate + CO2. It participates in quinol/quinone metabolism; 1,4-dihydroxy-2-naphthoate biosynthesis; 1,4-dihydroxy-2-naphthoate from chorismate: step 2/7. It functions in the pathway quinol/quinone metabolism; menaquinone biosynthesis. Catalyzes the thiamine diphosphate-dependent decarboxylation of 2-oxoglutarate and the subsequent addition of the resulting succinic semialdehyde-thiamine pyrophosphate anion to isochorismate to yield 2-succinyl-5-enolpyruvyl-6-hydroxy-3-cyclohexene-1-carboxylate (SEPHCHC). The protein is 2-succinyl-5-enolpyruvyl-6-hydroxy-3-cyclohexene-1-carboxylate synthase of Bdellovibrio bacteriovorus (strain ATCC 15356 / DSM 50701 / NCIMB 9529 / HD100).